Here is a 122-residue protein sequence, read N- to C-terminus: Cofilin-5 (122 aa).

Residues 3–122 (SRIIEIDPNC…VKDLIQLSNL (120 aa)) enclose the ADF-H domain.

This sequence belongs to the actin-binding proteins ADF family.

The protein localises to the cytoplasm. It is found in the cytoskeleton. Controls actin polymerization and depolymerization. This chain is Cofilin-5 (cofF), found in Dictyostelium discoideum (Social amoeba).